Consider the following 388-residue polypeptide: Mannitol-1-phosphate 5-dehydrogenase (388 aa).

3–14 (ALHFGAGNIGRG) contributes to the NAD(+) binding site.

The protein belongs to the mannitol dehydrogenase family.

It catalyses the reaction D-mannitol 1-phosphate + NAD(+) = beta-D-fructose 6-phosphate + NADH + H(+). In Buchnera aphidicola subsp. Schizaphis graminum (strain Sg), this protein is Mannitol-1-phosphate 5-dehydrogenase.